The sequence spans 693 residues: Heat shock protein homolog SSE1 (693 aa).

The interval 665–693 (LAEKLAAQRKAESEKKESKADAEGDVELD) is disordered. Residues 673–686 (RKAESEKKESKADA) show a composition bias toward basic and acidic residues.

It belongs to the heat shock protein 70 family.

It is found in the cytoplasm. The chain is Heat shock protein homolog SSE1 (SSE1) from Lachancea kluyveri (strain ATCC 58438 / CBS 3082 / BCRC 21498 / NBRC 1685 / JCM 7257 / NCYC 543 / NRRL Y-12651) (Yeast).